Reading from the N-terminus, the 276-residue chain is Rhomboid protease GlpG (276 aa).

6 helical membrane passes run 94–114 (GPVTWVMMIACVVVFIAMQIL), 142–162 (ALMHFSLMHILFNLLWWWYLG), 169–189 (LGSGKLIVITLISALLSGYVQ), 192–212 (FSGPWFGGLSGVVYALMGYVW), 229–249 (LIIFALIWIVAGWFDLFGMSM), and 250–270 (ANGAHIAGLAVGLAMAFVDSL). Residue Ser201 is the Nucleophile of the active site. His254 is a catalytic residue.

The protein belongs to the peptidase S54 family.

Its subcellular location is the cell inner membrane. The catalysed reaction is Cleaves type-1 transmembrane domains using a catalytic dyad composed of serine and histidine that are contributed by different transmembrane domains.. Rhomboid-type serine protease that catalyzes intramembrane proteolysis. This is Rhomboid protease GlpG from Escherichia coli O45:K1 (strain S88 / ExPEC).